A 237-amino-acid chain; its full sequence is BTB/POZ domain-containing protein KCTD6 (237 aa).

Residues 12-81 enclose the BTB domain; sequence HPVTLNVGGH…LRTSELTLPV (70 aa).

In terms of assembly, homopentamer. May be part of a cullin-containing E3 ubiquitin-protein ligase complex.

It participates in protein modification; protein ubiquitination. Its function is as follows. Probable substrate-specific adapter of a cullin-containing E3 ubiquitin-protein ligase complex mediating the ubiquitination and subsequent proteasomal degradation of target proteins. This chain is BTB/POZ domain-containing protein KCTD6 (kctd6), found in Danio rerio (Zebrafish).